The primary structure comprises 286 residues: Shikimate dehydrogenase (NADP(+)) (286 aa).

Residues Ser-20–Ser-22 and Thr-67 contribute to the shikimate site. Residue Lys-71 is the Proton acceptor of the active site. Positions 92 and 107 each coordinate shikimate. NADP(+) is bound by residues Gly-132–Ala-136 and Met-228. Tyr-230 is a binding site for shikimate. Gly-251 provides a ligand contact to NADP(+).

Belongs to the shikimate dehydrogenase family. As to quaternary structure, homodimer.

It carries out the reaction shikimate + NADP(+) = 3-dehydroshikimate + NADPH + H(+). It participates in metabolic intermediate biosynthesis; chorismate biosynthesis; chorismate from D-erythrose 4-phosphate and phosphoenolpyruvate: step 4/7. Involved in the biosynthesis of the chorismate, which leads to the biosynthesis of aromatic amino acids. Catalyzes the reversible NADPH linked reduction of 3-dehydroshikimate (DHSA) to yield shikimate (SA). This chain is Shikimate dehydrogenase (NADP(+)), found in Geobacter metallireducens (strain ATCC 53774 / DSM 7210 / GS-15).